The following is a 522-amino-acid chain: ARS-binding protein 1 (522 aa).

The 75-residue stretch at 70–144 (DVKRNRPPKY…RKRHILHAIN (75 aa)) folds into the HTH CENPB-type domain. Thr-460 is modified (phosphothreonine).

Interacts with mcm10.

Its subcellular location is the nucleus. In terms of biological role, binds, preferentially, to the Maundrell ARS consensus sequence within ARS3002. The protein is ARS-binding protein 1 (abp1) of Schizosaccharomyces pombe (strain 972 / ATCC 24843) (Fission yeast).